The chain runs to 860 residues: GAS2-like protein 2 (860 aa).

The span at 1 to 12 (MSQHVGHGRRPR) shows a compositional bias: basic residues. The segment at 1–22 (MSQHVGHGRRPRTPGPPVRSIR) is disordered. The Calponin-homology (CH) domain maps to 32 to 159 (EAMKEDLAEW…CLLELGRRAW (128 aa)). The GAR domain occupies 201 to 273 (CHFHNLDQMV…HYLDKHDPCR (73 aa)). Disordered regions lie at residues 281-459 (PGSF…SLAS), 473-574 (QLSE…RHTS), 697-743 (TTVR…KGKR), 758-781 (KLRP…IPKP), and 801-860 (ATLG…ESWV). The span at 301 to 316 (GPSQPQPTMTISRSQS) shows a compositional bias: polar residues. Positions 347–364 (PPVRARTLREDPLPRSQE) are enriched in basic and acidic residues. Composition is skewed to polar residues over residues 365 to 393 (KPTP…STLS) and 473 to 485 (QLSE…SSSP). Positions 431 to 860 (QRLQIPEATS…PLSPEEESWV (430 aa)) are interaction with ADORA2A and GNAS. Basic and acidic residues predominate over residues 530–549 (NLDRSTHGHHSVEASGDHQT). A compositionally biased stretch (polar residues) spans 724–733 (RSCSDPSSDK). Over residues 758-768 (KLRPRIRPRRD) the composition is skewed to basic residues. Positions 828–840 (SNISLESSIQPAE) are enriched in polar residues.

Belongs to the GAS2 family. In terms of assembly, interacts with ADORA2A (via its cytoplasmic C-terminal domain). Interacts with GNAS, GNAL, GNAQ, and GNA13. Interacts with MAPRE1. Expressed in tracheal epithelial cells (at protein level).

It localises to the cytoplasm. The protein resides in the cytoskeleton. Its subcellular location is the cell membrane. The protein localises to the stress fiber. It is found in the cilium basal body. In terms of biological role, involved in the cross-linking of microtubules and microfilaments. Regulates microtubule dynamics and stability by interacting with microtubule plus-end tracking proteins, such as MAPRE1, to regulate microtubule growth along actin stress fibers. Enhances ADORA2-mediated adenylyl cyclase activation by acting as a scaffold to recruit trimeric G-protein complexes to ADORA2A. Regulates ciliary orientation and performance in cells located in the airway. The chain is GAS2-like protein 2 (Gas2l2) from Mus musculus (Mouse).